The sequence spans 456 residues: MSQSPHVTVLGAGLAGTEAAWQVARAGVAVTLVEMRPIRRSPAHHSSDFAELVCSNSFGALSSDRAAGLLQEELRRLGSLVIGTADTHAVPAGGALAVDRGRYSAALTEALDQHPLVTIERREQQNLPPENAITVLATGPLTSEPLAEDLRQFTGRADCHFFDAASPIVHGDSIDLSVAFRASRYDKGDADYINCPMDKEQYLAFRQALLEAEQAELKDFDKNDATFFEGCLPIEELARRGEDTMRYGPLKPIGLWDPRWGDVNDRDVRRAKRAYAVVQLRQEDKDGRLWNLVGFQTNLKWGEQKRVLQMIPGLGQAEFVRFGVMHRNTFLESPQLLQPTLQFRQRPNLLAAGQITGTEGYAAAVAGGWLAGTNAARLALGLEPIDLPATCMSGALTHFVSEAPTAKFQPMPPNFGLLPDLPERIRDKRARYGAYRDRALQDLEPMRALQPETVTA.

11 to 16 contributes to the FAD binding site; the sequence is GAGLAG.

The protein belongs to the MnmG family. TrmFO subfamily. The cofactor is FAD.

It localises to the cytoplasm. The enzyme catalyses uridine(54) in tRNA + (6R)-5,10-methylene-5,6,7,8-tetrahydrofolate + NADH + H(+) = 5-methyluridine(54) in tRNA + (6S)-5,6,7,8-tetrahydrofolate + NAD(+). It catalyses the reaction uridine(54) in tRNA + (6R)-5,10-methylene-5,6,7,8-tetrahydrofolate + NADPH + H(+) = 5-methyluridine(54) in tRNA + (6S)-5,6,7,8-tetrahydrofolate + NADP(+). In terms of biological role, catalyzes the folate-dependent formation of 5-methyl-uridine at position 54 (M-5-U54) in all tRNAs. The polypeptide is Methylenetetrahydrofolate--tRNA-(uracil-5-)-methyltransferase TrmFO (Synechococcus sp. (strain CC9605)).